Here is a 448-residue protein sequence, read N- to C-terminus: N-succinylarginine dihydrolase (448 aa).

Residues 19-28 (GGLSYGNVAS), Asn-110, and 137-138 (HR) contribute to the substrate site. Glu-174 is a catalytic residue. Arg-214 contributes to the substrate binding site. His-250 is an active-site residue. Asp-252 and Asn-365 together coordinate substrate. The active-site Nucleophile is the Cys-371.

This sequence belongs to the succinylarginine dihydrolase family. In terms of assembly, homodimer.

The enzyme catalyses N(2)-succinyl-L-arginine + 2 H2O + 2 H(+) = N(2)-succinyl-L-ornithine + 2 NH4(+) + CO2. Its pathway is amino-acid degradation; L-arginine degradation via AST pathway; L-glutamate and succinate from L-arginine: step 2/5. Catalyzes the hydrolysis of N(2)-succinylarginine into N(2)-succinylornithine, ammonia and CO(2). This is N-succinylarginine dihydrolase from Pseudomonas fluorescens (strain ATCC BAA-477 / NRRL B-23932 / Pf-5).